The sequence spans 886 residues: Vam6/Vps39-like protein (886 aa).

The CNH domain occupies 15-294 (PLQIDCLAAW…RFITSGGSNI (280 aa)). A CHCR repeat occupies 573-750 (FTEDLPEVES…LLRMYLSPPS (178 aa)).

It belongs to the VAM6/VPS39 family. In terms of assembly, homooligomer. Interacts with TGFBR2 and, less efficiently, with TGFBR1; interaction with TGFBR2 is independent of the receptor kinase activity and of the presence of TGF-beta. Also interacts with ACVR2B, but not with BMPR2. Interacts with SMAD4, preferentially following TGF-beta treatment. Does not interact with SAMD2 or SMAD3. Component of the homotypic fusion and vacuole protein sorting (HOPS) complex; the core of which composed of the class C Vps proteins VPS11, VPS16, VPS18 and VPS33A, is associated with VPS39 and VPS41. Interacts with PLEKHM2; involved in VPS39 recruitment to ARL8B-containing lysosomes. Associates with adapter protein complex 3 (AP-3) and clathrin:AP-3 complexes. Interacts with STX17; this interaction is increased in the absence of TMEM39A. Interacts with RAB7, RAB2A and RAB2B. Interacts with RAB2A (GTP-bound); the interaction contributes to obtaining a functional HOPS complex that promotes autophagosome-lysosome membrane fusion driven by STX17-SNAP29-VAMP8. Interacts with RAB39A (GTP-bound) and RAB39B (GTP-bound); interaction with RAB39A contributes to obtaining a functional HOPS complex. (Microbial infection) Interacts with SARS coronavirus-2/SARS-CoV-2 ORF3A protein; the interaction is direct and sequestrates VPS39, thereby preventing HOPS complex from interacting with the autophagosomal SNARE protein STX17. ORF3A enhances the interaction of VPS39 with VPS11 and VPS18, while its interaction with the VPS16:VPS33A module is attenuated. Widely expressed, with highest levels in heart, skeletal muscle, kidney, pancreas, brain, placenta and spleen.

It localises to the cytoplasm. It is found in the lysosome membrane. The protein resides in the late endosome membrane. Regulator of TGF-beta/activin signaling, inhibiting SMAD3- and activating SMAD2-dependent transcription. Acts by interfering with SMAD3/SMAD4 complex formation, this would lead to inhibition of SMAD3-dependent transcription and relieve SMAD3 inhibition of SMAD2-dependent promoters, thus increasing SMAD2-dependent transcription. Does not affect TGF-beta-induced SMAD2 or SMAD3 phosphorylation, nor SMAD2/SMAD4 complex formation. Its function is as follows. Plays a role in vesicle-mediated protein trafficking to lysosomal compartments including the endocytic membrane transport and autophagic pathways. Acts as a component of the HOPS endosomal tethering complex. This complex is proposed to be involved in the Rab5-to-Rab7 endosome conversion probably implicating MON1A/B, and via binding SNAREs and SNARE complexes to mediate tethering and docking events during SNARE-mediated membrane fusion. The HOPS complex is proposed to be recruited to Rab7 on the late endosomal membrane and to regulate late endocytic, phagocytic and autophagic traffic towards lysosomes. Involved in homotypic vesicle fusions between late endosomes and in heterotypic fusions between late endosomes and lysosomes. Required for fusion of endosomes and autophagosomes with lysosomes. This Homo sapiens (Human) protein is Vam6/Vps39-like protein.